The primary structure comprises 454 residues: Ig mu chain C region (454 aa).

Residues 1 to 105 form a CH1 region; it reads SPSSPTVFPL…NKDLRVPIPV (105 aa). The cysteines at positions 27 and 88 are disulfide-linked. N45, N112, N192, N210, N238, N257, and N280 each carry an N-linked (GlcNAc...) asparagine glycan. Positions 106 to 218 are CH2; the sequence is VTEMNPNVSV…KNVSSTCAAS (113 aa). An intrachain disulfide couples C135 to C198. The interval 219–324 is CH3; the sequence is PSTDIQAFPI…QKKFISKPRE (106 aa). Cystine bridges form between C245–C304 and C352–C414. The CH4 stretch occupies residues 325–454; the sequence is MNKTPPAVYQ…IMSDAGGTCY (130 aa). N441 carries an N-linked (GlcNAc...) asparagine glycan.

The polypeptide is Ig mu chain C region (Mesocricetus auratus (Golden hamster)).